The sequence spans 86 residues: Mu-theraphotoxin-Cg2a 2 (86 aa).

The first 21 residues, 1–21 (MKVSVVITLAVLGVMFVWASA), serve as a signal peptide directing secretion. The propeptide occupies 22–50 (AELEERGSDQRDSPAWIKSMERIFQSEER). Intrachain disulfides connect C52-C66, C59-C71, and C65-C78. A Phenylalanine amide modification is found at F84.

Belongs to the neurotoxin 10 (Hwtx-1) family. 37 (Jztx-31) subfamily. Expressed by the venom gland.

Its subcellular location is the secreted. Functionally, inhibits both peak current and fast inactivation of voltage-gated sodium channels (Nav) channels. Inhibits the inactivation of Nav on DRG neurons (EC(50)=1.77 uM) and peak current of cardiac myocytes (IC(50)=0.90 uM). This chain is Mu-theraphotoxin-Cg2a 2, found in Chilobrachys guangxiensis (Chinese earth tiger tarantula).